Here is a 296-residue protein sequence, read N- to C-terminus: 4-hydroxy-tetrahydrodipicolinate synthase (296 aa).

Residue Thr49 coordinates pyruvate. The active-site Proton donor/acceptor is Tyr137. Catalysis depends on Lys166, which acts as the Schiff-base intermediate with substrate. Pyruvate is bound at residue Ile208.

The protein belongs to the DapA family. In terms of assembly, homotetramer; dimer of dimers.

It localises to the cytoplasm. It carries out the reaction L-aspartate 4-semialdehyde + pyruvate = (2S,4S)-4-hydroxy-2,3,4,5-tetrahydrodipicolinate + H2O + H(+). It participates in amino-acid biosynthesis; L-lysine biosynthesis via DAP pathway; (S)-tetrahydrodipicolinate from L-aspartate: step 3/4. In terms of biological role, catalyzes the condensation of (S)-aspartate-beta-semialdehyde [(S)-ASA] and pyruvate to 4-hydroxy-tetrahydrodipicolinate (HTPA). The protein is 4-hydroxy-tetrahydrodipicolinate synthase of Chlorobium chlorochromatii (strain CaD3).